Reading from the N-terminus, the 217-residue chain is 3-isopropylmalate dehydratase small subunit (217 aa).

The protein belongs to the LeuD family. LeuD type 1 subfamily. In terms of assembly, heterodimer of LeuC and LeuD.

The enzyme catalyses (2R,3S)-3-isopropylmalate = (2S)-2-isopropylmalate. It functions in the pathway amino-acid biosynthesis; L-leucine biosynthesis; L-leucine from 3-methyl-2-oxobutanoate: step 2/4. Its function is as follows. Catalyzes the isomerization between 2-isopropylmalate and 3-isopropylmalate, via the formation of 2-isopropylmaleate. The sequence is that of 3-isopropylmalate dehydratase small subunit from Delftia acidovorans (strain DSM 14801 / SPH-1).